A 354-amino-acid polypeptide reads, in one-letter code: DNA polymerase IV (354 aa).

One can recognise a UmuC domain in the interval 3-188; that stretch reads VIFVDFDYFF…LDIDEIPGIG (186 aa). Positions 7 and 105 each coordinate Mg(2+). The active site involves Glu106.

It belongs to the DNA polymerase type-Y family. In terms of assembly, monomer. Mg(2+) is required as a cofactor.

Its subcellular location is the cytoplasm. The catalysed reaction is DNA(n) + a 2'-deoxyribonucleoside 5'-triphosphate = DNA(n+1) + diphosphate. Functionally, poorly processive, error-prone DNA polymerase involved in untargeted mutagenesis. Copies undamaged DNA at stalled replication forks, which arise in vivo from mismatched or misaligned primer ends. These misaligned primers can be extended by PolIV. Exhibits no 3'-5' exonuclease (proofreading) activity. May be involved in translesional synthesis. This is DNA polymerase IV from Sulfolobus acidocaldarius (strain ATCC 33909 / DSM 639 / JCM 8929 / NBRC 15157 / NCIMB 11770).